We begin with the raw amino-acid sequence, 365 residues long: Peptide chain release factor 2 (365 aa).

An N5-methylglutamine modification is found at Gln251.

Belongs to the prokaryotic/mitochondrial release factor family. Methylated by PrmC. Methylation increases the termination efficiency of RF2.

Its subcellular location is the cytoplasm. Functionally, peptide chain release factor 2 directs the termination of translation in response to the peptide chain termination codons UGA and UAA. In Campylobacter jejuni subsp. jejuni serotype O:23/36 (strain 81-176), this protein is Peptide chain release factor 2.